A 276-amino-acid polypeptide reads, in one-letter code: Secretagogin (276 aa).

6 consecutive EF-hand domains span residues 12-47 (LDAAGFWQVWQRFDVEEKGYIEEKELDAFFYHMLTK), 71-93 (DVSKDGCIQMKELAGMFLSEDEN), 105-140 (DSSVEFMRIWRKYDADSSGFISAAELCNFLRDLFLH), 149-184 (KLEEYTGTMMKIFDKNKDGRLDLNDLARILALQENF), 197-232 (ERKRDFEKIFAHYDVSKTGALEGPEVDGFVKDMMEL), and 240-276 (VDLDKFREILLRHCDVNKDGKIQKSELALCLGLKINP). Ca(2+) is bound by residues Asp71, Ser73, Asp75, Cys77, Glu82, Asp118, Asp120, Ser122, Glu129, Asp162, Asn164, Asp166, Arg168, Asp173, Asp210, Ser212, Thr214, Glu221, Asp254, Asn256, Asp258, Lys260, and Glu265.

The protein resides in the cytoplasm. It is found in the secreted. The protein localises to the cytoplasmic vesicle. It localises to the secretory vesicle membrane. The polypeptide is Secretagogin (SCGN) (Bos taurus (Bovine)).